Consider the following 400-residue polypeptide: MNEDPAQQAMKVLAKYPLCDRCLGRLFAGLGRGLSNAERGRALKLSVVMSLHAMSLSGRLPENARDVLANAGGAAAQVYVELFGSPPEHRSCYICNDALDKFLDEMPQRVADAVKEWGGSTFLVGAKVDPGVIAREERIKAEFGLAFGESIKSEIKRELGKRAQQLGPKVSFDRPDVVVMVSFPDGSVSVQPRRLVVKGLYRRLRRDLQLRPREALSHPLVARLINDTRSSRVGIVGLVRDEKEVRALGLGIPVEFHLGGPRVRLVPPDGSIIEAEGASLEVNSSVEASGPEDLSRRVRVYRCVLYVEGGAFESLQLAAASLRGKEVRQKFMGKEVSGVVRGAECVDMGGGLAECIIALDERLHVMELVSGSGTEPSLSGLLGTAAECVVADLLGVIPLR.

One can recognise a THUMP domain in the interval 77–194 (QVYVELFGSP…DGSVSVQPRR (118 aa)). Y301 is a binding site for substrate.

It belongs to the pseudouridine synthase Pus10 family.

It carries out the reaction uridine(54) in tRNA = pseudouridine(54) in tRNA. The catalysed reaction is uridine(55) in tRNA = pseudouridine(55) in tRNA. Its function is as follows. Responsible for synthesis of pseudouridine from uracil-54 and uracil-55 in the psi GC loop of transfer RNAs. This is tRNA pseudouridine synthase Pus10 from Acidilobus saccharovorans (strain DSM 16705 / JCM 18335 / VKM B-2471 / 345-15).